A 164-amino-acid polypeptide reads, in one-letter code: MIILGIDPGLAILGYGIINYEGNRFKVLDYGAITTPSTMATPERLKTIYRELDRIITEYNPDTVAIEELFFNTNVKTALLVGHARGVAVLSAANHNKEIFEYTPLQVKQGVVGYGRADKSQIQQMVKTLLNLTKVPKPDDVADALAVAICHAHTGNFTEMFKIK.

Residues D7, E67, and D140 contribute to the active site. Mg(2+) is bound by residues D7, E67, and D140.

This sequence belongs to the RuvC family. As to quaternary structure, homodimer which binds Holliday junction (HJ) DNA. The HJ becomes 2-fold symmetrical on binding to RuvC with unstacked arms; it has a different conformation from HJ DNA in complex with RuvA. In the full resolvosome a probable DNA-RuvA(4)-RuvB(12)-RuvC(2) complex forms which resolves the HJ. It depends on Mg(2+) as a cofactor.

The protein localises to the cytoplasm. The enzyme catalyses Endonucleolytic cleavage at a junction such as a reciprocal single-stranded crossover between two homologous DNA duplexes (Holliday junction).. The RuvA-RuvB-RuvC complex processes Holliday junction (HJ) DNA during genetic recombination and DNA repair. Endonuclease that resolves HJ intermediates. Cleaves cruciform DNA by making single-stranded nicks across the HJ at symmetrical positions within the homologous arms, yielding a 5'-phosphate and a 3'-hydroxyl group; requires a central core of homology in the junction. The consensus cleavage sequence is 5'-(A/T)TT(C/G)-3'. Cleavage occurs on the 3'-side of the TT dinucleotide at the point of strand exchange. HJ branch migration catalyzed by RuvA-RuvB allows RuvC to scan DNA until it finds its consensus sequence, where it cleaves and resolves the cruciform DNA. This Alkaliphilus oremlandii (strain OhILAs) (Clostridium oremlandii (strain OhILAs)) protein is Crossover junction endodeoxyribonuclease RuvC.